We begin with the raw amino-acid sequence, 556 residues long: Formate--tetrahydrofolate ligase (556 aa).

An ATP-binding site is contributed by 65 to 72; it reads TPAGEGKS.

It belongs to the formate--tetrahydrofolate ligase family.

It carries out the reaction (6S)-5,6,7,8-tetrahydrofolate + formate + ATP = (6R)-10-formyltetrahydrofolate + ADP + phosphate. Its pathway is one-carbon metabolism; tetrahydrofolate interconversion. This is Formate--tetrahydrofolate ligase from Streptococcus equi subsp. zooepidemicus (strain MGCS10565).